A 59-amino-acid chain; its full sequence is Ribosome biogenesis protein Nop10 (59 aa).

The protein belongs to the NOP10 family.

Involved in ribosome biogenesis; more specifically in 18S rRNA pseudouridylation and in cleavage of pre-rRNA. The chain is Ribosome biogenesis protein Nop10 from Thermococcus sibiricus (strain DSM 12597 / MM 739).